We begin with the raw amino-acid sequence, 198 residues long: dITP/XTP pyrophosphatase (198 aa).

8–13 (TKNKGK) contacts substrate. Residue D69 is the Proton acceptor of the active site. A Mg(2+)-binding site is contributed by D69. Substrate is bound by residues S70, 152–155 (FGYD), K175, and 180–181 (HR).

Belongs to the HAM1 NTPase family. Homodimer. Mg(2+) is required as a cofactor.

It catalyses the reaction XTP + H2O = XMP + diphosphate + H(+). The enzyme catalyses dITP + H2O = dIMP + diphosphate + H(+). It carries out the reaction ITP + H2O = IMP + diphosphate + H(+). Its function is as follows. Pyrophosphatase that catalyzes the hydrolysis of nucleoside triphosphates to their monophosphate derivatives, with a high preference for the non-canonical purine nucleotides XTP (xanthosine triphosphate), dITP (deoxyinosine triphosphate) and ITP. Seems to function as a house-cleaning enzyme that removes non-canonical purine nucleotides from the nucleotide pool, thus preventing their incorporation into DNA/RNA and avoiding chromosomal lesions. This chain is dITP/XTP pyrophosphatase, found in Shouchella clausii (strain KSM-K16) (Alkalihalobacillus clausii).